We begin with the raw amino-acid sequence, 396 residues long: Tryptophan synthase beta chain (396 aa).

An N6-(pyridoxal phosphate)lysine modification is found at lysine 88.

The protein belongs to the TrpB family. In terms of assembly, tetramer of two alpha and two beta chains. Pyridoxal 5'-phosphate serves as cofactor.

The catalysed reaction is (1S,2R)-1-C-(indol-3-yl)glycerol 3-phosphate + L-serine = D-glyceraldehyde 3-phosphate + L-tryptophan + H2O. It participates in amino-acid biosynthesis; L-tryptophan biosynthesis; L-tryptophan from chorismate: step 5/5. Functionally, the beta subunit is responsible for the synthesis of L-tryptophan from indole and L-serine. In Actinobacillus pleuropneumoniae serotype 7 (strain AP76), this protein is Tryptophan synthase beta chain.